The chain runs to 105 residues: Large ribosomal subunit protein bL21 (105 aa).

This sequence belongs to the bacterial ribosomal protein bL21 family. As to quaternary structure, part of the 50S ribosomal subunit. Contacts protein L20.

In terms of biological role, this protein binds to 23S rRNA in the presence of protein L20. This chain is Large ribosomal subunit protein bL21, found in Rickettsia bellii (strain OSU 85-389).